Reading from the N-terminus, the 222-residue chain is Small ribosomal subunit protein eS8z (222 aa).

2 disordered regions span residues 1 to 37 (MGIS…ANTK) and 125 to 147 (KKKS…VAAP). Residues 8–26 (IHKRRATGGKQKQWRKKRK) are compositionally biased toward basic residues.

The protein belongs to the eukaryotic ribosomal protein eS8 family.

In Arabidopsis thaliana (Mouse-ear cress), this protein is Small ribosomal subunit protein eS8z (RPS8A).